Consider the following 204-residue polypeptide: ADP-ribosylation factor-like protein 15 (204 aa).

Residues 39-46, 82-86, and 142-145 each bind GTP; these read GLTGSGKT, ELGGA, and NHQD.

Belongs to the small GTPase superfamily. Arf family.

The sequence is that of ADP-ribosylation factor-like protein 15 (Arl15) from Mus musculus (Mouse).